Here is a 164-residue protein sequence, read N- to C-terminus: Ubiquitin-fold modifier-conjugating enzyme 1 (164 aa).

The active-site Glycyl thioester intermediate is the C116.

It belongs to the ubiquitin-conjugating enzyme family. UFC1 subfamily.

Functionally, E2-like enzyme which forms an intermediate with UFM1 via a thioester linkage. The protein is Ubiquitin-fold modifier-conjugating enzyme 1 of Drosophila erecta (Fruit fly).